The primary structure comprises 421 residues: 3-isopropylmalate dehydratase large subunit (421 aa).

Cys-302, Cys-362, and Cys-365 together coordinate [4Fe-4S] cluster.

The protein belongs to the aconitase/IPM isomerase family. LeuC type 2 subfamily. As to quaternary structure, heterodimer of LeuC and LeuD. The cofactor is [4Fe-4S] cluster.

The catalysed reaction is (2R,3S)-3-isopropylmalate = (2S)-2-isopropylmalate. It functions in the pathway amino-acid biosynthesis; L-leucine biosynthesis; L-leucine from 3-methyl-2-oxobutanoate: step 2/4. Catalyzes the isomerization between 2-isopropylmalate and 3-isopropylmalate, via the formation of 2-isopropylmaleate. This Nitratiruptor sp. (strain SB155-2) protein is 3-isopropylmalate dehydratase large subunit.